Consider the following 553-residue polypeptide: Syntaxin-binding protein 4 (553 aa).

Ser10, Ser12, Ser99, and Ser212 each carry phosphoserine. One can recognise a PDZ domain in the interval 19 to 105 (AFQMITIAKE…RLESAWEIAF (87 aa)). The stretch at 291 to 417 (SSEADEMERL…VLDCQLRKSE (127 aa)) forms a coiled coil. Position 463 is a phosphoserine (Ser463). In terms of domain architecture, WW spans 496 to 529 (DCLPYGWEEAYTADGIKYFINHVTQTTSWIHPVM).

As to quaternary structure, interacts with STX4A. Phosphorylated on Ser-99 by PKB/AKT2 after insulin treatment. Phosphorylation on Ser-99 abolishes the interaction with STX4A.

The protein resides in the cytoplasm. Functionally, plays a role in the translocation of transport vesicles from the cytoplasm to the plasma membrane. Inhibits the translocation of SLC2A4 from intracellular vesicles to the plasma membrane by STX4A binding and preventing the interaction between STX4A and VAMP2. Stimulation with insulin disrupts the interaction with STX4A, leading to increased levels of SLC2A4 at the plasma membrane. May also play a role in the regulation of insulin release by pancreatic beta cells after stimulation by glucose. The polypeptide is Syntaxin-binding protein 4 (STXBP4) (Homo sapiens (Human)).